A 288-amino-acid polypeptide reads, in one-letter code: Light-independent protochlorophyllide reductase iron-sulfur ATP-binding protein (288 aa).

Residues 10–15 (GIGKST) and Lys39 contribute to the ATP site. Ser14 serves as a coordination point for Mg(2+). Residues Cys95 and Cys129 each coordinate [4Fe-4S] cluster. 180–181 (NR) is an ATP binding site.

This sequence belongs to the NifH/BchL/ChlL family. As to quaternary structure, homodimer. Protochlorophyllide reductase is composed of three subunits; ChlL, ChlN and ChlB. Requires [4Fe-4S] cluster as cofactor.

It is found in the plastid. The protein resides in the chloroplast. The enzyme catalyses chlorophyllide a + oxidized 2[4Fe-4S]-[ferredoxin] + 2 ADP + 2 phosphate = protochlorophyllide a + reduced 2[4Fe-4S]-[ferredoxin] + 2 ATP + 2 H2O. The protein operates within porphyrin-containing compound metabolism; chlorophyll biosynthesis (light-independent). Its function is as follows. Component of the dark-operative protochlorophyllide reductase (DPOR) that uses Mg-ATP and reduced ferredoxin to reduce ring D of protochlorophyllide (Pchlide) to form chlorophyllide a (Chlide). This reaction is light-independent. The L component serves as a unique electron donor to the NB-component of the complex, and binds Mg-ATP. The sequence is that of Light-independent protochlorophyllide reductase iron-sulfur ATP-binding protein from Chara vulgaris (Common stonewort).